A 344-amino-acid chain; its full sequence is tRNA(Ile)-lysidine synthase (344 aa).

Residue 43-48 (SGGADS) participates in ATP binding.

It belongs to the tRNA(Ile)-lysidine synthase family.

The protein resides in the cytoplasm. The enzyme catalyses cytidine(34) in tRNA(Ile2) + L-lysine + ATP = lysidine(34) in tRNA(Ile2) + AMP + diphosphate + H(+). Ligates lysine onto the cytidine present at position 34 of the AUA codon-specific tRNA(Ile) that contains the anticodon CAU, in an ATP-dependent manner. Cytidine is converted to lysidine, thus changing the amino acid specificity of the tRNA from methionine to isoleucine. The sequence is that of tRNA(Ile)-lysidine synthase from Bordetella bronchiseptica (strain ATCC BAA-588 / NCTC 13252 / RB50) (Alcaligenes bronchisepticus).